Here is a 266-residue protein sequence, read N- to C-terminus: UPF0294 protein YafD (266 aa).

It belongs to the UPF0294 family.

Its subcellular location is the cytoplasm. This is UPF0294 protein YafD from Salmonella paratyphi C (strain RKS4594).